A 445-amino-acid polypeptide reads, in one-letter code: 3-phosphoshikimate 1-carboxyvinyltransferase (445 aa).

Residues 1-25 form a disordered region; that stretch reads MSGHGPAQPMTARRSGPLKGRAEIP. The 3-phosphoshikimate site is built by Lys-28, Ser-29, and Arg-33. Lys-28 is a binding site for phosphoenolpyruvate. Phosphoenolpyruvate-binding residues include Gly-101 and Arg-129. Positions 174, 176, 326, and 353 each coordinate 3-phosphoshikimate. Gln-176 provides a ligand contact to phosphoenolpyruvate. Asp-326 (proton acceptor) is an active-site residue. Phosphoenolpyruvate contacts are provided by Arg-357 and Arg-400.

This sequence belongs to the EPSP synthase family. In terms of assembly, monomer.

The protein resides in the cytoplasm. It catalyses the reaction 3-phosphoshikimate + phosphoenolpyruvate = 5-O-(1-carboxyvinyl)-3-phosphoshikimate + phosphate. Its pathway is metabolic intermediate biosynthesis; chorismate biosynthesis; chorismate from D-erythrose 4-phosphate and phosphoenolpyruvate: step 6/7. Its function is as follows. Catalyzes the transfer of the enolpyruvyl moiety of phosphoenolpyruvate (PEP) to the 5-hydroxyl of shikimate-3-phosphate (S3P) to produce enolpyruvyl shikimate-3-phosphate and inorganic phosphate. The protein is 3-phosphoshikimate 1-carboxyvinyltransferase of Cereibacter sphaeroides (strain ATCC 17029 / ATH 2.4.9) (Rhodobacter sphaeroides).